We begin with the raw amino-acid sequence, 189 residues long: MFEINGNLKVDINKFKKIYTTVFDKNISPQINEILDLFEFDTTKSSYEDVIEEYSKFENDSLGSFEYLDYSDLRLLSKRKWNNKEALIIGNGKSNYKTTVQIKGDLLDKVLKKPSPVISRNWSPDEQKALMVEVSTLGNKSEINWFFISQQLFLKGISRNARECQRKHESIQYVGLSGNPKAKFKGTFD.

Residues 121–172 (NWSPDEQKALMVEVSTLGNKSEINWFFISQQLFLKGISRNARECQRKHESIQ) enclose the Myb-like domain.

The sequence is that of Myb-like protein T (mybT) from Dictyostelium discoideum (Social amoeba).